The chain runs to 318 residues: Pantothenate kinase (318 aa).

96 to 103 (GSVAVGKS) is a binding site for ATP.

The protein belongs to the prokaryotic pantothenate kinase family.

Its subcellular location is the cytoplasm. It catalyses the reaction (R)-pantothenate + ATP = (R)-4'-phosphopantothenate + ADP + H(+). It functions in the pathway cofactor biosynthesis; coenzyme A biosynthesis; CoA from (R)-pantothenate: step 1/5. This Afipia carboxidovorans (strain ATCC 49405 / DSM 1227 / KCTC 32145 / OM5) (Oligotropha carboxidovorans) protein is Pantothenate kinase.